The chain runs to 146 residues: Snake venom vascular endothelial growth factor toxin (146 aa).

The first 24 residues, 1–24 (MAVYLLAVAILFCIQGWPLGTVQG), serve as a signal peptide directing secretion. Glutamine 25 carries the pyrrolidone carboxylic acid modification. Disulfide bonds link cysteine 38–cysteine 80, cysteine 69–cysteine 115, and cysteine 73–cysteine 117. A disordered region spans residues 118–146 (RPRSASGVNSRKHKRNPEEGEPRAKFPFV). Residues 133–146 (NPEEGEPRAKFPFV) are compositionally biased toward basic and acidic residues.

Belongs to the PDGF/VEGF growth factor family. Snake venom VEGF subfamily. In terms of assembly, homodimer; disulfide-linked. Interacts with VEGF receptor-1 (FLT1) with a high affinity, whereas it binds to VEGF receptor-2 (KDR) with a low affinity. Does not bind VEGF receptor-3 (FLT4). In terms of tissue distribution, expressed by the venom gland.

The protein localises to the secreted. Functionally, snake venom VEGFs that may contribute to venom dispersion and prey subjugation by inducing vascular permeability and hypotension. This protein induces an increase in capillary permeability after intradermal injection, as well as a drastic hypotensive effect after intravenous injection. The hypotension is mediated by nitric oxide (NO), which is produced by VEGF-activated endothelium NO synthase. Also induces angiogenesis in vitro. Like other crotalid VEGFs, this protein interacts with VEGF receptor-1 (FLT1) with a high affinity, whereas it binds to VEGF receptor-2 (KDR) with a low affinity. This Bothrops jararaca (Jararaca) protein is Snake venom vascular endothelial growth factor toxin.